Here is a 548-residue protein sequence, read N- to C-terminus: Glucan endo-1,3-beta-glucosidase (548 aa).

Positions 1 to 36 form a signal peptide, tat-type signal; that stretch reads MPHDRKNSSRRAWAALCAAVLAVSGALVGVAAPASA. A possesses beta-glucanase activity, but is unable to lyse viable cells region spans residues 37–430; sequence VPATIPLTIT…AGTGALRIGS (394 aa). One can recognise a GH64 domain in the interval 38-396; that stretch reads PATIPLTITN…PQAAYIKLDP (359 aa). Residue glutamate 153 is the Proton donor of the active site. Catalysis depends on aspartate 169, which acts as the Proton acceptor. The region spanning 422–548 is the Ricin B-type lectin domain; that stretch reads GTGALRIGST…NQTEAQRWTL (127 aa). Positions 472-548 are essential for the lytic activity, but not for the beta-glucanase function; the sequence is GKCLDVARSG…NQTEAQRWTL (77 aa).

The protein belongs to the glycosyl hydrolase 64 family. Predicted to be exported by the Tat system. The position of the signal peptide cleavage has been experimentally proven.

Its subcellular location is the periplasm. The catalysed reaction is Hydrolysis of (1-&gt;3)-beta-D-glucosidic linkages in (1-&gt;3)-beta-D-glucans.. Lysis of cellular walls containing beta-1,3-glucans. Implicated in the defense against fungal pathogens. The sequence is that of Glucan endo-1,3-beta-glucosidase from Cellulosimicrobium cellulans (Arthrobacter luteus).